Reading from the N-terminus, the 406-residue chain is Na(+)/H(+) antiporter NhaA (406 aa).

Transmembrane regions (helical) follow at residues 29–49 (FAGILLIIAFTLAIIVSNNIF), 75–95 (FIELVNDGLMTFFFLLIGLEM), 111–131 (ILPAVAALGGVVVPVLIYMFF), 141–161 (GWAIPIATDTAFVLGILSFFS), 170–190 (AFIIGFSLIDDAFALIILALF), 195–215 (INTPALLISSVIIFILFILNY), 220–240 (QLFYYIIVGLLLWISMVESGI), 242–262 (GTLCGAIIALFIPVNIKGEFN), 278–298 (YFILPLFVFMNSGILLEYFAF), 306–326 (ILALIYGIIFGLFVGKQLGIM), 349–369 (FYSIAILGGIGFTLSLFIGSI), and 382–402 (AAVIIGSLISALFGVAVLKYC).

Belongs to the NhaA Na(+)/H(+) (TC 2.A.33) antiporter family.

It is found in the cell inner membrane. The catalysed reaction is Na(+)(in) + 2 H(+)(out) = Na(+)(out) + 2 H(+)(in). Na(+)/H(+) antiporter that extrudes sodium in exchange for external protons. The protein is Na(+)/H(+) antiporter NhaA of Rickettsia massiliae (strain Mtu5).